Here is a 396-residue protein sequence, read N- to C-terminus: 8-amino-7-oxononanoate synthase (396 aa).

A substrate-binding site is contributed by Arg-19. 106–107 (GY) serves as a coordination point for pyridoxal 5'-phosphate. His-131 is a binding site for substrate. Pyridoxal 5'-phosphate contacts are provided by Ser-176, His-204, and Thr-233. Residue Lys-236 is modified to N6-(pyridoxal phosphate)lysine. Thr-350 contributes to the substrate binding site.

This sequence belongs to the class-II pyridoxal-phosphate-dependent aminotransferase family. BioF subfamily. As to quaternary structure, homodimer. Pyridoxal 5'-phosphate serves as cofactor.

The enzyme catalyses 6-carboxyhexanoyl-[ACP] + L-alanine + H(+) = (8S)-8-amino-7-oxononanoate + holo-[ACP] + CO2. It participates in cofactor biosynthesis; biotin biosynthesis. In terms of biological role, catalyzes the decarboxylative condensation of pimeloyl-[acyl-carrier protein] and L-alanine to produce 8-amino-7-oxononanoate (AON), [acyl-carrier protein], and carbon dioxide. The chain is 8-amino-7-oxononanoate synthase from Pseudomonas syringae pv. syringae (strain B728a).